The following is a 357-amino-acid chain: UDP-arabinopyranose mutase 1 (357 aa).

An N-acetylvaline modification is found at V2. The short motif at 110–112 is the DXD motif element; sequence DDD. R158 carries an N-linked (Glc...) arginine glycan.

Belongs to the RGP family. In terms of assembly, heteromers with RGP2, RGP3, RGP4 and RGP5. The cofactor is Mn(2+). Mg(2+) serves as cofactor. In terms of processing, reversibly glycosylated in vitro by UDP-glucose, UDP-xylose and UDP-galactose, but not UDP-mannose. Predominantly expressed in shoot and root apical meristems. Expressed in epidermal cells of leaves, inflorescence stems and seed coat. Expressed in pollen.

It is found in the cytoplasm. It localises to the cytosol. Its subcellular location is the golgi apparatus. The enzyme catalyses UDP-beta-L-arabinofuranose = UDP-beta-L-arabinopyranose. UDP-L-arabinose mutase involved in the biosynthesis of cell wall non-cellulosic polysaccharides. Catalyzes the interconvertion of UDP-L-arabinopyranose (UDP-Arap) and UDP-L-arabinofuranose (UDP-Araf) in vitro. Preferentially catalyzes the formation of UDP-Arap from UDP-Araf. At thermodynamic equilibrium in vitro the ratio of the pyranose form over the furanose form is 95:5. Is not active on other UDP-sugars (UDP-Gal, UDP-Xyl, UDP-Glc, GDP-Man and GDP-Fuc). Functions redundantly with RGP2 and is essential for proper cell walls and pollen development. Probably involved in the formation of the pectocellulosic cell wall layer intine. Is probably active as heteromer in vivo. The chain is UDP-arabinopyranose mutase 1 from Arabidopsis thaliana (Mouse-ear cress).